The following is a 681-amino-acid chain: Chaperone protein HtpG (681 aa).

The segment at 1-326 (MQKGNIGVTT…SPDIPLNVSR (326 aa)) is a; substrate-binding. The interval 327 to 545 (SYLQSDSNVK…YMRRMKEMAN (219 aa)) is b. Positions 546–681 (IQAGMSFYGE…NFVKRSIELI (136 aa)) are c. Positions 601-620 (DALKKKQEGKKDEDIPTAEK) are disordered.

This sequence belongs to the heat shock protein 90 family. In terms of assembly, homodimer.

It localises to the cytoplasm. Its function is as follows. Molecular chaperone. Has ATPase activity. This is Chaperone protein HtpG from Bacteroides fragilis (strain ATCC 25285 / DSM 2151 / CCUG 4856 / JCM 11019 / LMG 10263 / NCTC 9343 / Onslow / VPI 2553 / EN-2).